A 310-amino-acid polypeptide reads, in one-letter code: Olfactory receptor 2A25 (310 aa).

Residues 1–24 (MGGNQTSITEFLLLGFPIGPRIQM) lie on the Extracellular side of the membrane. N4 carries an N-linked (GlcNAc...) asparagine glycan. The helical transmembrane segment at 25–48 (LLFGLFSLFYIFILLGNGTILGLI) threads the bilayer. The Cytoplasmic portion of the chain corresponds to 49–56 (SLDSRLHT). A helical membrane pass occupies residues 57–78 (PMYFFLSHLAVVDIACACSTVP). Residues 79–99 (QMLVNLLHPAKPISFAGCMTQ) lie on the Extracellular side of the membrane. C96 and C188 are joined by a disulfide. The helical transmembrane segment at 100–119 (MFLFLSFAHTECLLLVVMSY) threads the bilayer. Topologically, residues 120–138 (DRYVAICHPLRYSTIMTWK) are cytoplasmic. The chain crosses the membrane as a helical span at residues 139-157 (VCITLALTSWILGVLLALV). Over 158 to 195 (HLVLLLPLSFCGPQKLNHFFCEIMAVLKLACADTHINE) the chain is Extracellular. Residues 196 to 218 (VMVLAGAVSVLVGAFFSTVISYV) traverse the membrane as a helical segment. The Cytoplasmic portion of the chain corresponds to 219-235 (HILCAILKIQSGEGCQK). Residues 236-258 (AFSICSSHLCVVGLFYGTAIIMY) traverse the membrane as a helical segment. The Extracellular segment spans residues 259–271 (VEPQYESPKEQKK). Residues 272–291 (YLLLFHSLFNPMLNPLIYSL) traverse the membrane as a helical segment. Topologically, residues 292-310 (RNKEVQGTLKRMLEKKRTS) are cytoplasmic.

Belongs to the G-protein coupled receptor 1 family.

Its subcellular location is the cell membrane. Odorant receptor. This Homo sapiens (Human) protein is Olfactory receptor 2A25 (OR2A25).